The following is a 334-amino-acid chain: DNA-directed RNA polymerase subunit alpha (334 aa).

Positions 1–232 are alpha N-terminal domain (alpha-NTD); it reads MVREEIAVST…IDLFIPFLHA (232 aa). Residues 268–334 are alpha C-terminal domain (alpha-CTD); it reads GIALKCIFID…ILQKHFTIDC (67 aa).

This sequence belongs to the RNA polymerase alpha chain family. As to quaternary structure, in plastids the minimal PEP RNA polymerase catalytic core is composed of four subunits: alpha, beta, beta', and beta''. When a (nuclear-encoded) sigma factor is associated with the core the holoenzyme is formed, which can initiate transcription.

The protein localises to the plastid. It is found in the chloroplast. The enzyme catalyses RNA(n) + a ribonucleoside 5'-triphosphate = RNA(n+1) + diphosphate. In terms of biological role, DNA-dependent RNA polymerase catalyzes the transcription of DNA into RNA using the four ribonucleoside triphosphates as substrates. The polypeptide is DNA-directed RNA polymerase subunit alpha (Chloranthus spicatus (Chulantree)).